The following is a 420-amino-acid chain: Threonine aspartase 1 (420 aa).

The tract at residues 1–25 (MIMEKGMNSGEGLPSRSSQASAAKV) is disordered. Thr234 acts as the Nucleophile in catalysis.

The protein belongs to the Ntn-hydrolase family. In terms of assembly, intramolecular proteolysis generates 2 subunits, alpha and beta, which reassemble through a non-covalent association to form the fully active enzyme.

Protease responsible for KMT2A/MLL1 and KMT2D/MLL2 processing and activation. Through substrate activation, it controls the expression of HOXA genes, and the expression of key cell cycle regulators including CCNA1, CCNB1, CCNE1 and CDKN2A. In Mus musculus (Mouse), this protein is Threonine aspartase 1 (Tasp1).